Reading from the N-terminus, the 425-residue chain is Serine--tRNA ligase (425 aa).

Residue 230–232 coordinates L-serine; that stretch reads TGE. 261 to 263 is a binding site for ATP; that stretch reads RKE. Glu-284 serves as a coordination point for L-serine. 348 to 351 contacts ATP; sequence EISS. L-serine is bound at residue Ser-385.

Belongs to the class-II aminoacyl-tRNA synthetase family. Type-1 seryl-tRNA synthetase subfamily. In terms of assembly, homodimer. The tRNA molecule binds across the dimer.

It is found in the cytoplasm. It carries out the reaction tRNA(Ser) + L-serine + ATP = L-seryl-tRNA(Ser) + AMP + diphosphate + H(+). The enzyme catalyses tRNA(Sec) + L-serine + ATP = L-seryl-tRNA(Sec) + AMP + diphosphate + H(+). It participates in aminoacyl-tRNA biosynthesis; selenocysteinyl-tRNA(Sec) biosynthesis; L-seryl-tRNA(Sec) from L-serine and tRNA(Sec): step 1/1. Functionally, catalyzes the attachment of serine to tRNA(Ser). Is also able to aminoacylate tRNA(Sec) with serine, to form the misacylated tRNA L-seryl-tRNA(Sec), which will be further converted into selenocysteinyl-tRNA(Sec). The protein is Serine--tRNA ligase of Wolbachia sp. subsp. Brugia malayi (strain TRS).